A 447-amino-acid polypeptide reads, in one-letter code: ATP-dependent protease ATPase subunit HslU (447 aa).

Residues Ile17 and 59–64 (GVGKTE) contribute to the ATP site. The disordered stretch occupies residues 136–160 (PPARGGFQGEPTAEEKPTEKKESAT). Residues 148-159 (AEEKPTEKKESA) are compositionally biased toward basic and acidic residues. 3 residues coordinate ATP: Asp260, Glu325, and Arg397.

This sequence belongs to the ClpX chaperone family. HslU subfamily. As to quaternary structure, a double ring-shaped homohexamer of HslV is capped on each side by a ring-shaped HslU homohexamer. The assembly of the HslU/HslV complex is dependent on binding of ATP.

The protein resides in the cytoplasm. Its function is as follows. ATPase subunit of a proteasome-like degradation complex; this subunit has chaperone activity. The binding of ATP and its subsequent hydrolysis by HslU are essential for unfolding of protein substrates subsequently hydrolyzed by HslV. HslU recognizes the N-terminal part of its protein substrates and unfolds these before they are guided to HslV for hydrolysis. The polypeptide is ATP-dependent protease ATPase subunit HslU (Coxiella burnetii (strain Dugway 5J108-111)).